Here is a 553-residue protein sequence, read N- to C-terminus: Tether containing UBX domain for GLUT4 (553 aa).

A2 is modified (N-acetylalanine). A compositionally biased stretch (low complexity) spans 182-202 (PGSLGSSASAGQAAASAPLPL). The disordered stretch occupies residues 182 to 324 (PGSLGSSASA…REPVDREPVV (143 aa)). S184 is modified (phosphoserine). Over residues 206-217 (ELSRGDLSRPED) the composition is skewed to basic and acidic residues. The segment covering 260–280 (RPLTSSSAKLPKSLSSPGGPS) has biased composition (low complexity). At S275 the chain carries Phosphoserine. The segment covering 296 to 324 (EQERERDPQQEQERERPVDREPVDREPVV) has biased composition (basic and acidic residues). Positions 317 to 380 (PVDREPVVCH…LVTKAFREAQ (64 aa)) are interaction with GLUT4. The region spanning 386 to 462 (ERYPKVALRV…NLFPAALVHL (77 aa)) is the UBX domain. The disordered stretch occupies residues 499–536 (GSPSPLPAPDPAPKSEPAAEEGALVPPEPIPGTAQPVK). Residues S500 and S502 each carry the phosphoserine modification. Residues 502 to 512 (SPLPAPDPAPK) are compositionally biased toward pro residues.

As to quaternary structure, interacts with GLUT4. Interacts with VCPKMT. Interacts with VCP. Ubiquitous. Highly expressed in testis, heart, skeletal muscle and pancreas.

The protein resides in the endomembrane system. Its subcellular location is the endoplasmic reticulum-Golgi intermediate compartment membrane. It localises to the cytoplasm. The protein localises to the nucleus. In terms of biological role, tethering protein that sequesters GLUT4-containing vesicles in the cytoplasm in the absence of insulin. Modulates the amount of GLUT4 that is available at the cell surface. Enhances VCP methylation catalyzed by VCPKMT. The sequence is that of Tether containing UBX domain for GLUT4 (ASPSCR1) from Homo sapiens (Human).